The primary structure comprises 1942 residues: Myosin-2 (1942 aa).

In terms of domain architecture, Myosin N-terminal SH3-like spans 33-82 (DAKTSVFVAEPKESFVKGTIQSKDAGKVTVKTEAGATLTVKEDQIFPMNP). Phosphothreonine is present on residues Thr-64 and Thr-69. Residues 86-785 (DKIEDMAMMT…LLGLLEEMRD (700 aa)) form the Myosin motor domain. 179-186 (GESGAGKT) is an ATP binding site. A Phosphotyrosine modification is found at Tyr-389. Phosphothreonine is present on Thr-419. Ser-625 carries the post-translational modification Phosphoserine. Residues 662–684 (LNKLMTNLRSTHPHFVRCIIPNE) form an actin-binding region. His-760 is subject to Pros-methylhistidine. The region spanning 788-817 (LAQLITRTQAMCRGFLARVEYQKMVERRES) is the IQ domain. Residues 849–1930 (SAETEKEMAT…ESQVNKLRVK (1082 aa)) adopt a coiled-coil conformation. Phosphoserine is present on residues Ser-1095 and Ser-1099. Positions 1130 to 1175 (EAERASRAKAEKQRSDLSRELEEISERLEEAGGATSAQIEMNKKRE) are disordered. Basic and acidic residues predominate over residues 1131-1159 (AERASRAKAEKQRSDLSRELEEISERLEE). Residues Ser-1165 and Ser-1240 each carry the phosphoserine modification. Residue Thr-1244 is modified to Phosphothreonine. The residue at position 1246 (Ser-1246) is a Phosphoserine. Thr-1258 carries the phosphothreonine modification. Ser-1264 carries the phosphoserine modification. Thr-1289 bears the Phosphothreonine mark. A phosphoserine mark is found at Ser-1291, Ser-1295, Ser-1306, and Ser-1309. Tyr-1467 carries the post-translational modification Phosphotyrosine. A Phosphothreonine modification is found at Thr-1470. Position 1477 is a phosphoserine (Ser-1477). Position 1495 is a phosphotyrosine (Tyr-1495). Ser-1498 bears the Phosphoserine mark. Thr-1504 carries the post-translational modification Phosphothreonine. Residue Ser-1517 is modified to Phosphoserine. The residue at position 1520 (Thr-1520) is a Phosphothreonine. 6 positions are modified to phosphoserine: Ser-1557, Ser-1577, Ser-1603, Ser-1606, Ser-1717, and Ser-1729. Phosphothreonine occurs at positions 1733 and 1739. Phosphoserine is present on Ser-1742.

This sequence belongs to the TRAFAC class myosin-kinesin ATPase superfamily. Myosin family. As to quaternary structure, muscle myosin is a hexameric protein that consists of 2 heavy chain subunits (MHC), 2 alkali light chain subunits (MLC) and 2 regulatory light chain subunits (MLC-2). Interacts with GCSAM. In terms of tissue distribution, expressed in type 2a myofibers in the tibialis anterior and soleus muscles (at protein level).

It localises to the cytoplasm. It is found in the myofibril. Myosins are actin-based motor molecules with ATPase activity essential for muscle contraction. The chain is Myosin-2 from Mus musculus (Mouse).